Reading from the N-terminus, the 277-residue chain is Bifunctional protein FolD (277 aa).

Residues 164 to 166 (GRS), S189, and V230 contribute to the NADP(+) site.

Belongs to the tetrahydrofolate dehydrogenase/cyclohydrolase family. In terms of assembly, homodimer.

The enzyme catalyses (6R)-5,10-methylene-5,6,7,8-tetrahydrofolate + NADP(+) = (6R)-5,10-methenyltetrahydrofolate + NADPH. It carries out the reaction (6R)-5,10-methenyltetrahydrofolate + H2O = (6R)-10-formyltetrahydrofolate + H(+). Its pathway is one-carbon metabolism; tetrahydrofolate interconversion. Catalyzes the oxidation of 5,10-methylenetetrahydrofolate to 5,10-methenyltetrahydrofolate and then the hydrolysis of 5,10-methenyltetrahydrofolate to 10-formyltetrahydrofolate. The sequence is that of Bifunctional protein FolD from Exiguobacterium sibiricum (strain DSM 17290 / CCUG 55495 / CIP 109462 / JCM 13490 / 255-15).